A 90-amino-acid polypeptide reads, in one-letter code: Putative toxin RelE1 (90 aa).

It belongs to the RelE toxin family.

In terms of biological role, toxic component of a type II toxin-antitoxin (TA) system. Its cognate antitoxin is RelB1 (Potential). This chain is Putative toxin RelE1 (relE1), found in Methanocaldococcus jannaschii (strain ATCC 43067 / DSM 2661 / JAL-1 / JCM 10045 / NBRC 100440) (Methanococcus jannaschii).